The following is a 346-amino-acid chain: Biotin synthase (346 aa).

Residues 40-264 form the Radical SAM core domain; it reads NEVQVSTLLS…MMPHSHVRLS (225 aa). [4Fe-4S] cluster contacts are provided by Cys-55, Cys-59, and Cys-62. Positions 99, 130, 190, and 262 each coordinate [2Fe-2S] cluster.

It belongs to the radical SAM superfamily. Biotin synthase family. Homodimer. [4Fe-4S] cluster is required as a cofactor. The cofactor is [2Fe-2S] cluster.

The catalysed reaction is (4R,5S)-dethiobiotin + (sulfur carrier)-SH + 2 reduced [2Fe-2S]-[ferredoxin] + 2 S-adenosyl-L-methionine = (sulfur carrier)-H + biotin + 2 5'-deoxyadenosine + 2 L-methionine + 2 oxidized [2Fe-2S]-[ferredoxin]. It functions in the pathway cofactor biosynthesis; biotin biosynthesis; biotin from 7,8-diaminononanoate: step 2/2. Catalyzes the conversion of dethiobiotin (DTB) to biotin by the insertion of a sulfur atom into dethiobiotin via a radical-based mechanism. This chain is Biotin synthase, found in Colwellia psychrerythraea (strain 34H / ATCC BAA-681) (Vibrio psychroerythus).